The chain runs to 489 residues: UDP-glycosyltransferase 85A1 (489 aa).

Residues S307, 364-366 (CPQ), 381-389 (HCGWNSILE), and 403-406 (FADQ) each bind UDP-alpha-D-glucose.

It belongs to the UDP-glycosyltransferase family. Expressed in root tips, lateral root initials, root apex, shoots, leaf periphery, leaf primordia and flowers.

In terms of biological role, involved in the O-glucosylation of trans-zeatin and dihydrozeatin. Also active in vitro on cis-zeatin. Not active on N-glucosylated substrates. In Arabidopsis thaliana (Mouse-ear cress), this protein is UDP-glycosyltransferase 85A1 (UGT85A1).